A 311-amino-acid polypeptide reads, in one-letter code: tRNA dimethylallyltransferase (311 aa).

Residue 10–17 (GPTASGKT) participates in ATP binding. Residue 12 to 17 (TASGKT) participates in substrate binding. 3 interaction with substrate tRNA regions span residues 35–38 (DSAL), 159–163 (QRINR), and 240–245 (RCVGYR).

It belongs to the IPP transferase family. Monomer. The cofactor is Mg(2+).

The catalysed reaction is adenosine(37) in tRNA + dimethylallyl diphosphate = N(6)-dimethylallyladenosine(37) in tRNA + diphosphate. Functionally, catalyzes the transfer of a dimethylallyl group onto the adenine at position 37 in tRNAs that read codons beginning with uridine, leading to the formation of N6-(dimethylallyl)adenosine (i(6)A). The chain is tRNA dimethylallyltransferase from Haemophilus influenzae (strain 86-028NP).